A 366-amino-acid chain; its full sequence is Mitogen-activated protein kinase 13 (366 aa).

In terms of domain architecture, Protein kinase spans 25 to 308 (YLAPAHVGSG…AAQALAHPFF (284 aa)). ATP is bound by residues 31 to 39 (VGSGAYGAV) and K54. D150 serves as the catalytic Proton acceptor. T180 carries the post-translational modification Phosphothreonine; by MAP2K3, MAP2K4, MAP2K6 and MAP2K7. Positions 180–182 (TGY) match the TXY motif. At Y182 the chain carries Phosphotyrosine. Residue S350 is modified to Phosphoserine.

Belongs to the protein kinase superfamily. CMGC Ser/Thr protein kinase family. MAP kinase subfamily. Interacts with MAPK8IP2. Requires Mg(2+) as cofactor. Post-translationally, dually phosphorylated on Thr-180 and Tyr-182 by MAP2K3/MKK3, MAP2K4/MKK4, MAP2K6/MKK6 and MAP2K7/MKK7, which activates the enzyme. Dephosphorylated by dual specificity phosphatase DUSP1.

It catalyses the reaction L-seryl-[protein] + ATP = O-phospho-L-seryl-[protein] + ADP + H(+). It carries out the reaction L-threonyl-[protein] + ATP = O-phospho-L-threonyl-[protein] + ADP + H(+). Its activity is regulated as follows. Activated by phosphorylation on threonine and tyrosine by dual specificity kinases, MAP2K3/MKK3, MAP2K6/MKK6, MAP2K4/MKK4 and MAP2K7/MKK7. Activation by ultraviolet radiation, hyperosmotic shock, anisomycin or by TNF-alpha is mediated by MAP2K3/MKK3. Inhibited by dual specificity phosphatase DUSP1. Its function is as follows. Serine/threonine kinase which acts as an essential component of the MAP kinase signal transduction pathway. MAPK13 is one of the four p38 MAPKs which play an important role in the cascades of cellular responses evoked by extracellular stimuli such as pro-inflammatory cytokines or physical stress leading to direct activation of transcription factors such as ELK1 and ATF2. Accordingly, p38 MAPKs phosphorylate a broad range of proteins and it has been estimated that they may have approximately 200 to 300 substrates each. MAPK13 is one of the less studied p38 MAPK isoforms. Some of the targets are downstream kinases such as MAPKAPK2, which are activated through phosphorylation and further phosphorylate additional targets. Plays a role in the regulation of protein translation by phosphorylating and inactivating EEF2K. Involved in cytoskeletal remodeling through phosphorylation of MAPT and STMN1. Mediates UV irradiation induced up-regulation of the gene expression of CXCL14. Plays an important role in the regulation of epidermal keratinocyte differentiation, apoptosis and skin tumor development. Phosphorylates the transcriptional activator MYB in response to stress which leads to rapid MYB degradation via a proteasome-dependent pathway. MAPK13 also phosphorylates and down-regulates PRKD1 during regulation of insulin secretion in pancreatic beta cells. This Mus musculus (Mouse) protein is Mitogen-activated protein kinase 13 (Mapk13).